A 194-amino-acid polypeptide reads, in one-letter code: NAD(P)H-quinone oxidoreductase subunit I (194 aa).

2 4Fe-4S ferredoxin-type domains span residues 55–84 (GRIH…VDWE) and 95–124 (NHYS…MTEE). [4Fe-4S] cluster-binding residues include C64, C67, C70, C74, C104, C107, C110, and C114. The interval 173 to 194 (DLPANAPRPGARPEDLVEKTEA) is disordered. Residues 183 to 194 (ARPEDLVEKTEA) show a composition bias toward basic and acidic residues.

Belongs to the complex I 23 kDa subunit family. As to quaternary structure, NDH-1 is composed of at least 11 different subunits. Requires [4Fe-4S] cluster as cofactor.

The protein localises to the cellular thylakoid membrane. It catalyses the reaction a plastoquinone + NADH + (n+1) H(+)(in) = a plastoquinol + NAD(+) + n H(+)(out). The catalysed reaction is a plastoquinone + NADPH + (n+1) H(+)(in) = a plastoquinol + NADP(+) + n H(+)(out). In terms of biological role, NDH-1 shuttles electrons from an unknown electron donor, via FMN and iron-sulfur (Fe-S) centers, to quinones in the respiratory and/or the photosynthetic chain. The immediate electron acceptor for the enzyme in this species is believed to be plastoquinone. Couples the redox reaction to proton translocation, and thus conserves the redox energy in a proton gradient. This chain is NAD(P)H-quinone oxidoreductase subunit I, found in Nostoc sp. (strain PCC 7120 / SAG 25.82 / UTEX 2576).